Consider the following 446-residue polypeptide: Probable cytosolic iron-sulfur protein assembly protein 1 (446 aa).

WD repeat units lie at residues 17-59 (AFKP…AHSN), 63-106 (GHTR…PLEE), 143-182 (GHEN…EGDD), 192-241 (EHDG…EWAC), 247-291 (GHSS…PEAS), 330-368 (VHTR…NPST), and 398-446 (GHGP…SIEL). A compositionally biased stretch (basic and acidic residues) spans 106 to 128 (EGTKKGESTEIDVTRRRNNNDSD). A disordered region spans residues 106-133 (EGTKKGESTEIDVTRRRNNNDSDKDNDD).

This sequence belongs to the WD repeat CIA1 family.

Its function is as follows. Essential component of the cytosolic iron-sulfur (Fe/S) protein assembly machinery. Required for the maturation of extramitochondrial Fe/S proteins. The protein is Probable cytosolic iron-sulfur protein assembly protein 1 of Pyricularia oryzae (strain 70-15 / ATCC MYA-4617 / FGSC 8958) (Rice blast fungus).